The following is a 338-amino-acid chain: Arginase, mitochondrial (338 aa).

The N-terminal 15 residues, 1 to 15, are a transit peptide targeting the mitochondrion; it reads MSTIARRGFHYMQRL. Residues serine 73 and 92–95 each bind L-ornithine; that span reads DSTN. Histidine 157, aspartate 181, histidine 183, and aspartate 185 together coordinate Mn(2+). Residue 185–187 participates in L-ornithine binding; that stretch reads DLY. 191–193 contacts substrate; it reads EGN. Serine 220 is a binding site for L-ornithine. Mn(2+)-binding residues include aspartate 266 and aspartate 268. Residue glutamate 309 coordinates substrate.

Belongs to the arginase family. As to quaternary structure, forms homohexamers. Requires Mn(2+) as cofactor.

It is found in the mitochondrion. It carries out the reaction L-arginine + H2O = urea + L-ornithine. The catalysed reaction is agmatine + H2O = urea + putrescine. It participates in nitrogen metabolism; urea cycle; L-ornithine and urea from L-arginine: step 1/1. The protein operates within amine and polyamine biosynthesis; putrescine biosynthesis via agmatine pathway; putrescine from agmatine: step 1/1. In terms of biological role, catalyzes the hydrolysis of L-arginine to urea and L-ornithine. The latter can be utilized in the urea cycle or as a precursor for the synthesis of both polyamines and proline. Possesses agmatinase activity. Catalyzes the formation of putrescine from agmatine. This is Arginase, mitochondrial from Medicago truncatula (Barrel medic).